Reading from the N-terminus, the 3083-residue chain is MAAIMIGSISVPIVESARCATVQTGNRVNIVAPGHVAVCKPQMKSHSYYKHASEKLSKQASESINILNSFFDTDPEMRFRLTRNEMSKVKKGPNGRMILRKPRAQRVLERISFEKIEKGAERQVLPWRVYATVTSIINTFTDERNGIANSSLRSPFYKRSCRKEKKKIVCENVVRSASVNNLCDRVLKIAREKNIPVEMIGKKKNRHTLTFKNFKGSFIGKVSLAHERGQMRHVEMSYEQFGFILQAICRVTNTRCVRDEDIKPGCSGWVLGDDHELTQKFSRLPCLVIRGRDDEGIVNALEPVFFYDDVDHYSSQPEVQFFQGWRRMFDNFKPSSDHVCKVDHGNEECGELAAIFSQALFPVVKLSCQTCREKLSRVSFEEFKDSLAINFTVHKSEWDSLKENPHHDNVLKLIKGATQATQNLKLSSEVMKLVQNHTSTHMKQIQDINRALMKGSLVTQDELDLALKQLLEMTQWFKNHMHLTGEEALKTFRNKRSSKAMINPSLLCDNQLDKNGNFVWGERGYHSKRLFKNFFEEVIPSEGYTKYIVRNFPNGTRKLAIGSLIVPLNLDRARTALLGESIEKEPLTSACVSQQNGNYIHSCCCVTMDDGTPMYSDVKSPTKRHLVIGASGDPKYIDLPASEADRMYIAKEGYCYLNIFLAMLVNVNENEAKDFTKMIRDVLIPMLGQWPSLMDVATAAYILGVFHPETRCAELPRILVDHATQTMHVIDSYGSLTVGYHVLKAGTVNHLIQFASNDLQSEMKHYRVGGTPTQRIKLEEQLIKGIFKPKLMMQLLQDDPYVLILGMVSPTILVHMYRMRHFERGIEMWIKRDHEVGKIFVILEQLTRKVALTEVLVDQLDLISEASPHLLEIMKGCQDNQRAYVPALDLLTVQVEREFSNKELKVNGYPDLQQTLYDMREKIYAKQLHDSWQELSLLEKSCVTVRLKRFSIFTERKLTQQAKDGKRVSSLQFVHECFITTRVHAKSIRDVGMRKFNEALVGTCKFLFTCGFKIFARCYSDIIYLVNVCLIFSLVLQMSNTVRSMISATREEKERALANKADENERTLMHMYHIFSKKQDDAPLYSEFLEHVRNVRPDLEETLLYMAGAEIVTPQAKSAVQVQFEKIIAVVALLTMCFDAERSDAIFKILTKLKTVFGTVGETVRLQGLEDIENLEDDKKLTIDFDINTNEAQSSTTFDVHFDDWWNRQLQQNRTVPHYRTTGKFLEFTRNTAAFVANEIASSNEGEFLVRGAVGSGKSTSLPAHLAKKGKVLLLEPTRPLAENVSRQLAGDPFFQNVTLRMRGLSCFGSSNITVMTSGYAFHYYVNNPHQMMEFDFIIIDECHVTDSATIAFNCALKEYNFAGKLIKVSATPPGRECDFDTQFAVKVKTEDHLSFQAFVGAQRTGSNADMIQHGNNILVYVASYNEVDMLSKLLTERQFSVTKVDGRTMQLGKTTIETHGTSQKPHFIVATNIIENGVTLDVDCVVDFGLKVVAELDSESRCVRYSKKPVNYGERIQRLGRVGRSKPGTALRIGHTEKGIENIPEFIATEAAALSFAYGLSVTTHGVSTNILGKCTVKQMKCALNFELTPFFTTHLIRHDGSMHPLIHEELKQFKLRDSEMVLNKVALPHQFVSQWMTQGDYEHIGVHIQCNENTRIPFYTNGIPDRVYEKIWKCIQENKNDALFGRLSSACSTKVSYTLSTDPAALPRTIAIIDHLLAEEMMKRNHFDMISSAVTGYSFSLAGIADSFRKRYMRDHTAHNIAILQQARAQLLEFDSKNVNINNLSDLEGIGVIKSVVLQSKQEVSNFLGLRGKWDGRKFANDVILAIMTLLGGGWFMWEYFTKKVNEPVRVESKKRRSQKLKFRDAYDRKVGREIFGDDETIGRTFGEAYTKRGKVKGNNSTKGMGRKTRNFVHLYGVEPENYSFIRFVDPLTGHTLDESTHTDISLVQEEFGNIREKFLENDLISRQSIINKPGIQAYFMGKGTAEALKFDFTPHVPSLSCSNSNAHAGYPERENELRQTGTPVKVSLKDVPEKNEHVELESKSIYKGVRDYNGISTIVCQLTNDSDRLKETMYGIGYGPIIITNGHLFRKNNGTILVRSWHGEFTVKNTTTLKVHFIEGKDVVLVRMPKTFPPFKSNASFRAPKREERACLVGTNFQEKSLRSTVSESSMTNPRRTGSYWIHWISTNEGDCGLPMVSTTDGKLIGLHGKASTVSSKNYFVPFTDDFMATHLSKLDDLTWTQHWLWQPSKIAWGLLNLVDEQPGPEFRISNLVKDLFNSGVETQSKRERWVYESCEGNLRAVGSAQSALVTKHVVKGKCPFFEEYLQTHAEASAYFRPLMGEYQPSKLNKEAFKKDFFKYNKPVIVNQLDHDKFLEAVDGVIRMMCDFEFNECRFITDPEEIYSSLNMKAAIGAQYRGKKKEYFEGLDNFDMERLLFQSCERLFNGYKGLWNGSLKAELRPLEKVQANKTRTFTAAPIDTLLGAKVCVDDFNNEFYSKNLKCPWTVGMSKFYGGWDKLMRALPDGWLYCHADGSQFDSSLTPALLNAVLIIRSFYMEDWWVGQEMLENLYAEIVYTPILAPDGTIFKKFRGNNSGQPSTVVDNTLMVVISIYYACIKFGWGYDEIENRLVFFANGDDLILAVKDEDSGLLDNMSASFSELGLNYDFSERTHKREDLWFMSHQAMLVDGMYIPKLERERIVSILEWDRSKEVMHRTEAICAAMIEAWGHTELLHEIRKFYLWFVEKEEVRELAALGKAPYIAETALRKLYTDKGAETSELARYLQALHQDVFFEQRDTVMLQSDTQTKEADAGAAKRDKDEEKEKKKDVASSSANEKTMTATAKDKDVNAGSHGKIVPRLSKITKKMSLPRVKGSVILDIDHLLEYKPDQIELYNTRASHQQFASWFNQVKAEYDLNEQQMGVVMNGFMVWCIENGTSPDINGVWFMMDGDEQVEYPLKPIVENAKPTLRQIMHHFSDAAEAYIEMRNAEAPYMPRYGLLRNLRDRSLARYAFDFYEVNSKTPDRAREAVAQMKAAALSNVSSRLFGLDGNVATNSEDTERHTARDVNRNMHTLLGVNTMQ.

One can recognise a Peptidase S30 domain in the interval 173–313 (VVRSASVNNL…VFFYDDVDHY (141 aa)). Catalysis depends on for P1 proteinase activity residues histidine 226, glutamate 235, and serine 267. The Involved in interaction with stylet and aphid transmission signature appears at 365–368 (KLSC). Residues 621–623 (PTK) carry the Involved in virions binding and aphid transmission motif. One can recognise a Peptidase C6 domain in the interval 647–769 (MYIAKEGYCY…QSEMKHYRVG (123 aa)). Catalysis depends on for helper component proteinase activity residues cysteine 655 and histidine 728. Residues 1239 to 1391 (EIASSNEGEF…TQFAVKVKTE (153 aa)) enclose the Helicase ATP-binding domain. 1252–1259 (GAVGSGKS) contacts ATP. The short motif at 1341–1344 (DECH) is the DECH box element. A Helicase C-terminal domain is found at 1410–1569 (DMIQHGNNIL…GLSVTTHGVS (160 aa)). The Nuclear localization signal signature appears at 1894 to 1903 (KRGKVKGNNS). The residue at position 1918 (tyrosine 1918) is an O-(5'-phospho-RNA)-tyrosine. The region spanning 2045-2263 (SKSIYKGVRD…IAWGLLNLVD (219 aa)) is the Peptidase C4 domain. Active-site for nuclear inclusion protein A activity residues include histidine 2090, aspartate 2125, and cysteine 2195. A RdRp catalytic domain is found at 2529 to 2653 (WLYCHADGSQ…AVKDEDSGLL (125 aa)). The disordered stretch occupies residues 2805 to 2854 (SDTQTKEADAGAAKRDKDEEKEKKKDVASSSANEKTMTATAKDKDVNAGS). A compositionally biased stretch (basic and acidic residues) spans 2808–2831 (QTKEADAGAAKRDKDEEKEKKKDV). Residues 2832 to 2843 (ASSSANEKTMTA) show a composition bias toward polar residues.

The protein belongs to the potyviridae genome polyprotein family. In terms of assembly, interacts with host eIF4E protein (via cap-binding region); this interaction mediates the translation of the VPg-viral RNA conjugates. Part of a complex that comprises VPg, RNA, host EIF4E and EIF4G; this interaction mediates the translation of the VPg-viral RNA conjugates. VPg is uridylylated by the polymerase and is covalently attached to the 5'-end of the genomic RNA. This uridylylated form acts as a nucleotide-peptide primer for the polymerase. Post-translationally, potyviral RNA is expressed as two polyproteins which undergo post-translational proteolytic processing. Genome polyprotein is processed by NIa-pro, P1 and HC-pro proteinases resulting in the production of at least ten individual proteins. P3N-PIPO polyprotein is cleaved by P1 and HC-pro proteinases resulting in the production of three individual proteins. The P1 proteinase and the HC-pro cleave only their respective C-termini autocatalytically. 6K1 is essential for proper proteolytic separation of P3 from CI.

The protein resides in the host cytoplasmic vesicle. Its subcellular location is the host nucleus. It localises to the virion. The enzyme catalyses RNA(n) + a ribonucleoside 5'-triphosphate = RNA(n+1) + diphosphate. It catalyses the reaction Hydrolyzes glutaminyl bonds, and activity is further restricted by preferences for the amino acids in P6 - P1' that vary with the species of potyvirus, e.g. Glu-Xaa-Xaa-Tyr-Xaa-Gln-|-(Ser or Gly) for the enzyme from tobacco etch virus. The natural substrate is the viral polyprotein, but other proteins and oligopeptides containing the appropriate consensus sequence are also cleaved.. The catalysed reaction is Hydrolyzes a Gly-|-Gly bond at its own C-terminus, commonly in the sequence -Tyr-Xaa-Val-Gly-|-Gly, in the processing of the potyviral polyprotein.. Functionally, required for aphid transmission and also has proteolytic activity. Only cleaves a Gly-Gly dipeptide at its own C-terminus. Interacts with virions and aphid stylets. Acts as a suppressor of RNA-mediated gene silencing, also known as post-transcriptional gene silencing (PTGS), a mechanism of plant viral defense that limits the accumulation of viral RNAs. May have RNA-binding activity. Its function is as follows. Has helicase activity. It may be involved in replication. In terms of biological role, indispensable for virus replication. Mediates the cap-independent, EIF4E-dependent translation of viral genomic RNAs. Binds to the cap-binding site of host EIF4E and thus interferes with the host EIF4E-dependent mRNA export and translation. VPg-RNA directly binds EIF4E and is a template for transcription. Also forms trimeric complexes with EIF4E-EIF4G, which are templates for translation. Functionally, has RNA-binding and proteolytic activities. Its function is as follows. An RNA-dependent RNA polymerase that plays an essential role in the virus replication. In terms of biological role, involved in aphid transmission, cell-to-cell and systemis movement, encapsidation of the viral RNA and in the regulation of viral RNA amplification. The polypeptide is Genome polyprotein (Zucchini yellow mosaic virus (strain Reunion Island) (ZYMV)).